The sequence spans 184 residues: MSKTFKAIRDRTYSGVGDLIKLLPTGTVFLFQFLNPVLTNNGHCLLINKYLTGVLIVICAFSCCFTCFTDSYRTRDGYVHYGVATVKGLWPDSSSVDLSSKRLRVGDFVHAFFSLIVFSVISLLDANTVNCFYPGFGSAGKIFLMVLPPVIGVISGAVFTVFPSRRHGIGNPSDHSEDDASEMK.

4 helical membrane passes run 19-39, 45-65, 105-125, and 142-162; these read LIKL…PVLT, LLIN…SCCF, VGDF…SLLD, and IFLM…FTVF.

Belongs to the plant DMP1 protein family. As to expression, expressed constitutively in leaves, stems, flowers, siliques and roots.

The protein localises to the endoplasmic reticulum membrane. The protein resides in the vacuole membrane. In terms of biological role, involved in membrane remodeling. The chain is Protein DMP2 from Arabidopsis thaliana (Mouse-ear cress).